A 22-amino-acid polypeptide reads, in one-letter code: 65 kDa membrane protein (22 aa).

The segment at 1 to 22 (AAKPLDKSSSSLHHGYSKVHVP) is disordered.

It localises to the cell membrane. Functionally, binds various plasma and ECM-proteins. This is 65 kDa membrane protein from Staphylococcus aureus.